Here is a 339-residue protein sequence, read N- to C-terminus: Phenylalanine--tRNA ligase alpha subunit (339 aa).

Residue Glu254 coordinates Mg(2+).

This sequence belongs to the class-II aminoacyl-tRNA synthetase family. Phe-tRNA synthetase alpha subunit type 1 subfamily. In terms of assembly, tetramer of two alpha and two beta subunits. Mg(2+) is required as a cofactor.

The protein localises to the cytoplasm. The catalysed reaction is tRNA(Phe) + L-phenylalanine + ATP = L-phenylalanyl-tRNA(Phe) + AMP + diphosphate + H(+). The sequence is that of Phenylalanine--tRNA ligase alpha subunit from Clostridium botulinum (strain Alaska E43 / Type E3).